Reading from the N-terminus, the 200-residue chain is Recombination protein RecR (200 aa).

The segment at 57–72 (CSHCRTFTENERCEIC) adopts a C4-type zinc-finger fold. Residues 81 to 176 (GLLCVVESPA…KVSRIAHGVP (96 aa)) enclose the Toprim domain.

Belongs to the RecR family.

Its function is as follows. May play a role in DNA repair. It seems to be involved in an RecBC-independent recombinational process of DNA repair. It may act with RecF and RecO. This is Recombination protein RecR from Aeromonas hydrophila subsp. hydrophila (strain ATCC 7966 / DSM 30187 / BCRC 13018 / CCUG 14551 / JCM 1027 / KCTC 2358 / NCIMB 9240 / NCTC 8049).